The chain runs to 2752 residues: Serine/arginine repetitive matrix protein 2 (2752 aa).

N-acetylmethionine is present on Met1. A coiled-coil region spans residues 60-92 (HERKRRVELRCLELEEMMEEQGYEEQQIQEKVA). Position 101 is an N6-acetyllysine (Lys101). Glycyl lysine isopeptide (Lys-Gly) (interchain with G-Cter in SUMO2) cross-links involve residues Lys108 and Lys130. The interval 141–2131 (ISDSYVDGSS…MSPTPLDRCR (1991 aa)) is disordered. Phosphotyrosine is present on Tyr145. Lys169 bears the N6-acetyllysine mark. Residues 175–185 (RESSSSRSPTP) are compositionally biased toward low complexity. Basic residues-rich tracts occupy residues 186–197 (KQKKKKKKKDRG) and 207–249 (RERK…KRSR). Residues 197–259 (GRRSESSSPR…STTPAPKSRR (63 aa)) are sufficient for RNA-binding. Ser220 and Ser222 each carry phosphoserine. Residues 263–290 (STSADSASSSDTSRSRSRSAAAKTHTTA) are compositionally biased toward low complexity. Thr286 bears the Phosphothreonine mark. Residues Ser295, Ser297, Ser300, Ser322, and Ser323 each carry the phosphoserine modification. The segment covering 313-333 (PGTTSTQRPSSPETATKQPSS) has biased composition (polar residues). Over residues 335-347 (YEDKDKDKKEKSA) the composition is skewed to basic and acidic residues. Low complexity predominate over residues 348–360 (TRPSPSPERSSTG). A phosphoserine mark is found at Ser351, Ser353, Ser357, and Ser358. 2 positions are modified to phosphothreonine: Thr359 and Thr367. Residue Ser377 is modified to Phosphoserine. The segment covering 380-398 (PLATTPLSQEPVNPPSEAS) has biased composition (polar residues). Phosphothreonine is present on residues Thr383 and Thr384. Phosphoserine is present on residues Ser387, Ser395, Ser398, Ser404, and Ser408. Basic and acidic residues predominate over residues 399-410 (PTRDRSPPKSPE). Low complexity predominate over residues 411–421 (KLPQSSSSESS). A phosphoserine mark is found at Ser424, Ser435, Ser436, Ser437, Ser440, and Ser454. Positions 461–483 (NRSHGRAKRDKSHSHTPSRRMGR) are enriched in basic residues. A phosphoserine mark is found at Ser484, Ser486, Ser506, Ser508, Ser510, Ser534, Ser536, and Ser543. Residues 491–536 (KRGRSRSRTPTKRGHSRSRSPQWRRSRSAQRWGRSRSPQRRGRSRS) show a composition bias toward basic residues. A compositionally biased stretch (low complexity) spans 537-546 (PQRPGWSRSR). Basic residues-rich tracts occupy residues 547–564 (NTQRRGRSRSARRGRSHS), 571–723 (GRSR…RRGR), and 732–742 (NKSRTSQRRSR). Phosphoserine occurs at positions 702, 704, and 706. A phosphoserine mark is found at Ser778, Ser780, and Ser783. The segment covering 790-805 (SQTPPRRSRSGSSQPK) has biased composition (low complexity). Positions 806 to 816 (AKSRTPPRRSR) are enriched in basic residues. Low complexity predominate over residues 828–841 (KTPSRQSHSSSSPH). Phosphoserine occurs at positions 846 and 854. Over residues 849–869 (PPRQGSITSPQANEQSVTPQR) the composition is skewed to polar residues. The residue at position 856 (Thr856) is a Phosphothreonine. Phosphoserine is present on residues Ser857 and Ser864. Thr866 bears the Phosphothreonine mark. Phosphoserine is present on residues Ser871, Ser875, Ser876, Ser908, Ser935, Ser950, Ser952, Ser954, Ser957, Ser968, Ser970, Ser972, Ser973, and Ser974. Low complexity-rich tracts occupy residues 901–917 (SSTPPRQSPSRSSSPQP) and 924–945 (SPRQRSHSGSSSPSPSRVTSRT). A phosphothreonine mark is found at Thr977 and Thr983. Phosphoserine occurs at positions 992 and 994. Tyr996 bears the Phosphotyrosine mark. Thr1003 bears the Phosphothreonine mark. Over residues 1008-1017 (SLSGSKSPCP) the composition is skewed to low complexity. A phosphoserine mark is found at Ser1010, Ser1014, Ser1024, Ser1028, Ser1032, and Ser1042. The segment covering 1040-1064 (KSSTPPGESYFGVSSLQLKGQSQTS) has biased composition (polar residues). Position 1043 is a phosphothreonine (Thr1043). A Phosphotyrosine modification is found at Tyr1049. Phosphoserine is present on residues Ser1064, Ser1069, Ser1072, Ser1073, Ser1083, Ser1099, Ser1101, Ser1102, and Ser1103. Polar residues predominate over residues 1071 to 1092 (TSSPEVRQSHSESPSLQSKSQT). Over residues 1093 to 1104 (SPKGGRSRSSSP) the composition is skewed to low complexity. The residue at position 1106 (Thr1106) is a Phosphothreonine. Residues Ser1112, Ser1122, Ser1124, Ser1129, Ser1132, Ser1152, Ser1179, Ser1188, and Ser1198 each carry the phosphoserine modification. The span at 1132-1159 (SPEQSRFQSDSSSYPTVDSNSLLGQSRL) shows a compositional bias: polar residues. The segment covering 1204-1214 (DTLRTPPRERS) has biased composition (basic and acidic residues). Position 1208 is a phosphothreonine (Thr1208). Ser1214, Ser1219, Ser1227, Ser1254, Ser1257, Ser1258, Ser1266, Ser1270, and Ser1271 each carry phosphoserine. Residues 1216–1233 (AGSSPETKEQNSALPTSS) are compositionally biased toward polar residues. A compositionally biased stretch (polar residues) spans 1283–1292 (TLDQSQSQAS). Phosphoserine is present on residues Ser1311, Ser1318, Ser1320, Ser1326, Ser1329, Ser1336, Ser1348, Ser1368, Ser1382, Ser1383, Ser1384, Ser1387, Ser1401, Ser1403, and Ser1404. Residues 1318–1328 (SNSPLRENSFG) show a composition bias toward polar residues. The span at 1376–1386 (TRSSGHSSSEL) shows a compositional bias: polar residues. Residue Thr1413 is modified to Phosphothreonine. Ser1415, Ser1421, Ser1423, and Ser1424 each carry phosphoserine. At Thr1434 the chain carries Phosphothreonine. A compositionally biased stretch (low complexity) spans 1441 to 1452 (SGSSPGLRDGSG). 2 positions are modified to phosphoserine: Ser1444 and Ser1451. A Phosphothreonine modification is found at Thr1453. Polar residues predominate over residues 1453 to 1463 (TPSRHSLSGSS). Ser1458, Ser1460, Ser1462, and Ser1463 each carry phosphoserine. At Thr1472 the chain carries Phosphothreonine. Phosphoserine occurs at positions 1482 and 1483. Thr1492 bears the Phosphothreonine mark. Phosphoserine is present on residues Ser1497, Ser1499, Ser1501, and Ser1502. The residue at position 1511 (Thr1511) is a Phosphothreonine. A phosphoserine mark is found at Ser1517, Ser1519, Ser1521, and Ser1522. Thr1531 is modified (phosphothreonine). Residues 1534-1544 (GQRSRSGSSQE) show a composition bias toward polar residues. Phosphoserine occurs at positions 1537, 1539, 1541, 1542, and 1552. Over residues 1555–1567 (ERSESDSSPDSKA) the composition is skewed to basic and acidic residues. The segment covering 1568-1577 (KTRTPLRQRS) has biased composition (basic residues). 15 positions are modified to phosphoserine: Ser1577, Ser1579, Ser1581, Ser1582, Ser1598, Ser1600, Ser1601, Ser1616, Ser1620, Ser1621, Ser1648, Ser1658, Ser1691, Ser1693, and Ser1694. Residues 1638–1657 (SGSSSKGRGPSPEGSSSTES) show a composition bias toward low complexity. A compositionally biased stretch (basic residues) spans 1681–1691 (KSRTPPRRRSS). Thr1698 carries the post-translational modification Phosphothreonine. Residues Ser1727, Ser1729, Ser1731, Ser1732, Ser1762, and Ser1764 each carry the phosphoserine modification. Composition is skewed to basic residues over residues 1769–1789 (GLQRSRSRSRREKTRTTRRRD) and 1798–1816 (SRRRQRSRSRSRVTRRRRG). A phosphoserine mark is found at Ser1818, Ser1822, Ser1854, Ser1857, Ser1876, and Ser1878. Over residues 1834–1854 (SSRRRRGRSRTPPTSRKRSRS) the composition is skewed to basic residues. Residues 1862 to 2068 (KRSRSRASPA…PRTARGKRSL (207 aa)) are compositionally biased toward basic residues. Thr1880 is modified (phosphothreonine). A phosphoserine mark is found at Ser1884 and Ser1890. The residue at position 1892 (Thr1892) is a Phosphothreonine. Ser1893, Ser1916, Ser1919, Ser1923, and Ser1925 each carry phosphoserine. Thr1927 and Thr1931 each carry phosphothreonine. Phosphoserine is present on residues Ser1946 and Ser1948. Phosphothreonine occurs at positions 1950 and 1954. A phosphoserine mark is found at Ser1958 and Ser1960. 2 positions are modified to phosphothreonine: Thr1962 and Thr1966. Phosphoserine occurs at positions 1970, 1972, and 1975. The residue at position 1978 (Thr1978) is a Phosphothreonine. A phosphoserine mark is found at Ser1984, Ser1987, Ser1996, Ser1999, Ser2008, Ser2011, Ser2018, and Ser2020. The residue at position 2022 (Thr2022) is a Phosphothreonine. Ser2030 and Ser2032 each carry phosphoserine. The residue at position 2034 (Thr2034) is a Phosphothreonine. A phosphoserine mark is found at Ser2042, Ser2044, Ser2046, and Ser2067. At Thr2069 the chain carries Phosphothreonine. Low complexity predominate over residues 2070 to 2095 (RSPPAIRRRSASGSSSDRSRSATPPA). Residues Ser2071 and Ser2090 each carry the phosphoserine modification. Position 2092 is a phosphothreonine (Thr2092). A compositionally biased stretch (polar residues) spans 2097 to 2124 (RNHSGSRTPPVALNSSRMSCFSRPSMSP). Ser2100 and Ser2102 each carry phosphoserine. Position 2104 is a phosphothreonine (Thr2104). Ser2118, Ser2121, Ser2123, and Ser2132 each carry phosphoserine. The residue at position 2144 (Thr2144) is a Phosphothreonine. Residues Arg2194, Arg2207, Arg2231, and Arg2246 each carry the omega-N-methylarginine modification. Phosphoserine is present on Ser2272. Residues Arg2274 and Arg2288 each carry the omega-N-methylarginine modification. Phosphothreonine is present on residues Thr2289, Thr2291, and Thr2302. The residue at position 2310 (Ser2310) is a Phosphoserine. The interval 2311 to 2342 (LTGSGTPPTAANYPSSSRTPQAPASANLVGPR) is disordered. 2 positions are modified to phosphothreonine: Thr2316 and Thr2329. Residues 2317-2334 (PPTAANYPSSSRTPQAPA) show a composition bias toward polar residues. Position 2335 is a phosphoserine (Ser2335). Arg2342 bears the Omega-N-methylarginine mark. Phosphoserine occurs at positions 2343, 2368, and 2376. Phosphothreonine is present on Thr2381. At Ser2382 the chain carries Phosphoserine. Position 2384 is an asymmetric dimethylarginine; alternate (Arg2384). An Omega-N-methylarginine; alternate modification is found at Arg2384. Residues 2389–2752 (AYERVSGRTS…PMRHRSSRSP (364 aa)) are disordered. Ser2394, Ser2398, and Ser2407 each carry phosphoserine. Phosphothreonine is present on Thr2409. 6 positions are modified to phosphoserine: Ser2412, Ser2415, Ser2426, Ser2429, Ser2449, and Ser2453. A compositionally biased stretch (polar residues) spans 2426–2439 (SPSSRMGQAPSQSL). Positions 2455–2473 (FSDQSRCLIAQTTPVAGSQ) are enriched in polar residues. 3 stretches are compositionally biased toward low complexity: residues 2474–2487 (SLSSGAVATTTSSA), 2515–2526 (AQQPSALAALQP), and 2533–2567 (SSSSSSSSSSSSSSSSSSSSSSSSGSSSSDSEGSS). Ser2581 carries the phosphoserine modification. Phosphothreonine is present on Thr2583. Lys2587 is covalently cross-linked (Glycyl lysine isopeptide (Lys-Gly) (interchain with G-Cter in SUMO2)). Thr2599 is subject to Phosphothreonine. A compositionally biased stretch (low complexity) spans 2608–2648 (SSSSSSSSSSSSSSSSSSSSSSSSSSSSSSSSSSSSSSSSS). Over residues 2651–2668 (PAKPGPQALPKPASPKKP) the composition is skewed to pro residues. Phosphoserine is present on residues Ser2664, Ser2675, Ser2677, Ser2684, Ser2688, Ser2690, Ser2692, Ser2694, Ser2702, and Ser2706. The segment covering 2669–2689 (PPGERRSRSPRKPIDSLRDSR) has biased composition (basic and acidic residues). A compositionally biased stretch (low complexity) spans 2707 to 2716 (PRDQQSSSSE). A compositionally biased stretch (basic and acidic residues) spans 2717-2729 (RGSRRGQRGDSRS). Thr2738 carries the post-translational modification Phosphothreonine. Ser2740 is modified (phosphoserine). Over residues 2743 to 2752 (PMRHRSSRSP) the composition is skewed to basic residues.

It belongs to the CWC21 family. In terms of assembly, component of pre-catalytic, catalytic and post-catalytic spliceosome complexes. Found in a pre-mRNA splicing complex with SFRS4, SFRS5, SNRP70, SNRPA1, SRRM1 and SRRM2. Component of the minor spliceosome, which splices U12-type introns. Interacts with DHX8. Interacts with CACTIN. Expressed in liver, placenta, and white blood cells.

The protein localises to the nucleus. It is found in the nucleus speckle. In terms of biological role, required for pre-mRNA splicing as component of the spliceosome. As a component of the minor spliceosome, involved in the splicing of U12-type introns in pre-mRNAs. This is Serine/arginine repetitive matrix protein 2 (SRRM2) from Homo sapiens (Human).